Consider the following 331-residue polypeptide: NADH-quinone oxidoreductase subunit H (331 aa).

8 helical membrane-spanning segments follow: residues 7-27, 81-101, 114-134, 154-174, 187-207, 238-258, 271-291, and 310-330; these read ALVTIILTVVKAIVVLLAVVI, MIFTLAPVIAMGALLVAFAIV, IGILFFFAMAGLTVYAVLFAG, ISYEVFLALSLMGIVAQVGSF, VWFIIPQFFGFCTFIIAGVAV, FFVGEYIGIVLVSALLATLFF, WLSFFYFAAKTGFFIMLFILI, and VCLPLTLINLLVTGALVLAAA.

This sequence belongs to the complex I subunit 1 family. NDH-1 is composed of 13 different subunits. Subunits NuoA, H, J, K, L, M, N constitute the membrane sector of the complex.

The protein localises to the cell inner membrane. The catalysed reaction is a quinone + NADH + 5 H(+)(in) = a quinol + NAD(+) + 4 H(+)(out). In terms of biological role, NDH-1 shuttles electrons from NADH, via FMN and iron-sulfur (Fe-S) centers, to quinones in the respiratory chain. The immediate electron acceptor for the enzyme in this species is believed to be ubiquinone. Couples the redox reaction to proton translocation (for every two electrons transferred, four hydrogen ions are translocated across the cytoplasmic membrane), and thus conserves the redox energy in a proton gradient. This subunit may bind ubiquinone. The sequence is that of NADH-quinone oxidoreductase subunit H from Pseudomonas paraeruginosa (strain DSM 24068 / PA7) (Pseudomonas aeruginosa (strain PA7)).